Consider the following 171-residue polypeptide: Adenine phosphoribosyltransferase (171 aa).

It belongs to the purine/pyrimidine phosphoribosyltransferase family. In terms of assembly, homodimer.

The protein localises to the cytoplasm. The enzyme catalyses AMP + diphosphate = 5-phospho-alpha-D-ribose 1-diphosphate + adenine. Its pathway is purine metabolism; AMP biosynthesis via salvage pathway; AMP from adenine: step 1/1. Catalyzes a salvage reaction resulting in the formation of AMP, that is energically less costly than de novo synthesis. The protein is Adenine phosphoribosyltransferase of Pelotomaculum thermopropionicum (strain DSM 13744 / JCM 10971 / SI).